The primary structure comprises 86 residues: Weak neurotoxin 10 (86 aa).

Positions 1–21 (MKTLLLTLVVVTIVCLDLGYT) are cleaved as a signal peptide. 5 cysteine pairs are disulfide-bonded: cysteine 24/cysteine 45, cysteine 27/cysteine 32, cysteine 38/cysteine 63, cysteine 67/cysteine 78, and cysteine 79/cysteine 84.

It belongs to the three-finger toxin family. Ancestral subfamily. Orphan group II sub-subfamily. In terms of tissue distribution, expressed by the venom gland.

The protein localises to the secreted. Binds with low affinity to muscular (alpha-1-beta-1-delta-epsilon/CHRNA1-CHRNB1-CHRND-CHRNE) and very low affinity to neuronal (alpha-7/CHRNA7) nicotinic acetylcholine receptor (nAChR). This chain is Weak neurotoxin 10 (WNTX10), found in Naja sputatrix (Malayan spitting cobra).